A 351-amino-acid chain; its full sequence is UDP-3-O-acylglucosamine N-acyltransferase (351 aa).

The active-site Proton acceptor is the histidine 240.

It belongs to the transferase hexapeptide repeat family. LpxD subfamily. As to quaternary structure, homotrimer.

The enzyme catalyses a UDP-3-O-[(3R)-3-hydroxyacyl]-alpha-D-glucosamine + a (3R)-hydroxyacyl-[ACP] = a UDP-2-N,3-O-bis[(3R)-3-hydroxyacyl]-alpha-D-glucosamine + holo-[ACP] + H(+). Its pathway is bacterial outer membrane biogenesis; LPS lipid A biosynthesis. Catalyzes the N-acylation of UDP-3-O-acylglucosamine using 3-hydroxyacyl-ACP as the acyl donor. Is involved in the biosynthesis of lipid A, a phosphorylated glycolipid that anchors the lipopolysaccharide to the outer membrane of the cell. This Pseudomonas savastanoi pv. phaseolicola (strain 1448A / Race 6) (Pseudomonas syringae pv. phaseolicola (strain 1448A / Race 6)) protein is UDP-3-O-acylglucosamine N-acyltransferase.